The following is a 248-amino-acid chain: Probable transcriptional regulatory protein RHE_CH03475 (248 aa).

The protein belongs to the TACO1 family.

It localises to the cytoplasm. The sequence is that of Probable transcriptional regulatory protein RHE_CH03475 from Rhizobium etli (strain ATCC 51251 / DSM 11541 / JCM 21823 / NBRC 15573 / CFN 42).